Consider the following 403-residue polypeptide: Creatinase (403 aa).

His-232 is an active-site residue.

This sequence belongs to the peptidase M24 family. Creatinase subfamily. As to quaternary structure, homodimer.

It catalyses the reaction creatine + H2O = sarcosine + urea. This Flavobacterium sp. (strain U-188) protein is Creatinase.